We begin with the raw amino-acid sequence, 149 residues long: Deoxyuridine 5'-triphosphate nucleotidohydrolase (149 aa).

Substrate is bound by residues 68–70, asparagine 81, 85–87, and methionine 95; these read RSG and LID.

It belongs to the dUTPase family. Mg(2+) is required as a cofactor.

It catalyses the reaction dUTP + H2O = dUMP + diphosphate + H(+). Its pathway is pyrimidine metabolism; dUMP biosynthesis; dUMP from dCTP (dUTP route): step 2/2. This enzyme is involved in nucleotide metabolism: it produces dUMP, the immediate precursor of thymidine nucleotides and it decreases the intracellular concentration of dUTP so that uracil cannot be incorporated into DNA. This Janthinobacterium sp. (strain Marseille) (Minibacterium massiliensis) protein is Deoxyuridine 5'-triphosphate nucleotidohydrolase.